Here is a 485-residue protein sequence, read N- to C-terminus: Glutamyl-tRNA(Gln) amidotransferase subunit A (485 aa).

Residues Lys79 and Ser154 each act as charge relay system in the active site. The active-site Acyl-ester intermediate is the Ser178.

This sequence belongs to the amidase family. GatA subfamily. As to quaternary structure, heterotrimer of A, B and C subunits.

It catalyses the reaction L-glutamyl-tRNA(Gln) + L-glutamine + ATP + H2O = L-glutaminyl-tRNA(Gln) + L-glutamate + ADP + phosphate + H(+). Functionally, allows the formation of correctly charged Gln-tRNA(Gln) through the transamidation of misacylated Glu-tRNA(Gln) in organisms which lack glutaminyl-tRNA synthetase. The reaction takes place in the presence of glutamine and ATP through an activated gamma-phospho-Glu-tRNA(Gln). The chain is Glutamyl-tRNA(Gln) amidotransferase subunit A from Clostridium botulinum (strain Alaska E43 / Type E3).